A 94-amino-acid chain; its full sequence is Large ribosomal subunit protein uL23c (94 aa).

This sequence belongs to the universal ribosomal protein uL23 family. As to quaternary structure, part of the 50S ribosomal subunit.

The protein localises to the plastid. Its subcellular location is the chloroplast. Its function is as follows. Binds to 23S rRNA. This is Large ribosomal subunit protein uL23c (rpl23) from Tupiella akineta (Green alga).